Here is a 30-residue protein sequence, read N- to C-terminus: 80 kDa carcinoembryonic antigen-binding protein (30 aa).

In terms of assembly, binds to carcinoembryonic antigen (CEA). Post-translationally, the N-terminus is blocked.

The protein localises to the cell membrane. May play a role in the development of hepatic metastases from colorectal cancers. The sequence is that of 80 kDa carcinoembryonic antigen-binding protein from Rattus norvegicus (Rat).